We begin with the raw amino-acid sequence, 214 residues long: Cell division protein B1 (214 aa).

Functionally, part of a cell division machinery. The protein is Cell division protein B1 of Sulfolobus acidocaldarius (strain ATCC 33909 / DSM 639 / JCM 8929 / NBRC 15157 / NCIMB 11770).